The chain runs to 377 residues: MAETQRRPRVYFDIQIGSQKAGRIALELVRLPFNDVVPKTAENFRALCTGEKGVGKQRKPLSYKGSIFHRVIKQFMIQGGDFTNFNGTGGESIYGEKFPDENFELKHDRPFLLSMANSGPGTNGSQFFITTVPTPHLDGKHVVFGEVINGKSIVRKIENMPTQADKPTTDVTIVDCGELSGEDYENATKQVADATGDPYEDYPDDHQGEELNAQVCFKIASELKNFGNTAFKSGDVALGLDKYQKGLRYLNEFPDPDENDPKDLEPQMKSLRFTLHSNSSLLANKLGQYKNAQNWATYALEVADAANAKEADRAKAYYRRAVAYSGQKEEDEALKDLQEALKLAPGDAGILNEIAKVKKAIKDSEAKEKAAARKFFS.

Residues 11 to 178 form the PPIase cyclophilin-type domain; it reads YFDIQIGSQK…TDVTIVDCGE (168 aa). 3 TPR repeats span residues 220–253, 273–306, and 314–347; these read ASELKNFGNTAFKSGDVALGLDKYQKGLRYLNEF, FTLHSNSSLLANKLGQYKNAQNWATYALEVADAA, and AKAYYRRAVAYSGQKEEDEALKDLQEALKLAPGD.

This sequence belongs to the cyclophilin-type PPIase family. PPIase D subfamily.

The protein localises to the cytoplasm. It catalyses the reaction [protein]-peptidylproline (omega=180) = [protein]-peptidylproline (omega=0). Functionally, PPIases accelerate the folding of proteins. It catalyzes the cis-trans isomerization of proline imidic peptide bonds in oligopeptides. This is Peptidyl-prolyl cis-trans isomerase D (cpr6) from Aspergillus fumigatus (strain ATCC MYA-4609 / CBS 101355 / FGSC A1100 / Af293) (Neosartorya fumigata).